Reading from the N-terminus, the 75-residue chain is Large ribosomal subunit protein bL31 (75 aa).

This sequence belongs to the bacterial ribosomal protein bL31 family. Type A subfamily. As to quaternary structure, part of the 50S ribosomal subunit.

In terms of biological role, binds the 23S rRNA. This chain is Large ribosomal subunit protein bL31, found in Rhodopseudomonas palustris (strain BisB5).